Here is a 449-residue protein sequence, read N- to C-terminus: Sensor protein QseC (449 aa).

Residues 1-12 lie on the Cytoplasmic side of the membrane; that stretch reads MKLTQRLSLRVR. The helical transmembrane segment at 13-33 threads the bilayer; the sequence is LTLIFLILVSITWAISSFVAW. At 34–161 the chain is on the periplasmic side; sequence RKTTDNVDEL…REDMALAIVA (128 aa). The chain crosses the membrane as a helical span at residues 162–182; that stretch reads AQLTPWLIALPFMLLILLLLL. The region spanning 183–235 is the HAMP domain; the sequence is HRELRPLKKLAQALRFRSPESETPLDAKGVPSEVRPLVEALNQLFSRIHSMMV. Residues 183-449 lie on the Cytoplasmic side of the membrane; that stretch reads HRELRPLKKL…EGGFEAVVRW (267 aa). In terms of domain architecture, Histidine kinase spans 243–449; it reads DAAHELRSPL…EGGFEAVVRW (207 aa). His246 carries the phosphohistidine; by autocatalysis modification.

Its subcellular location is the cell inner membrane. The enzyme catalyses ATP + protein L-histidine = ADP + protein N-phospho-L-histidine.. In terms of biological role, member of a two-component regulatory system QseB/QseC. Activates the flagella regulon by activating transcription of FlhDC. May activate QseB by phosphorylation. The protein is Sensor protein QseC (qseC) of Salmonella typhi.